The chain runs to 286 residues: 2-oxoglutarate synthase subunit KorB (286 aa).

In terms of assembly, heterotetramer of the KorA, KorB, KorC and KorD subunits.

The catalysed reaction is 2 oxidized [2Fe-2S]-[ferredoxin] + 2-oxoglutarate + CoA = succinyl-CoA + 2 reduced [2Fe-2S]-[ferredoxin] + CO2 + H(+). The polypeptide is 2-oxoglutarate synthase subunit KorB (korB) (Methanothermobacter thermautotrophicus (strain ATCC 29096 / DSM 1053 / JCM 10044 / NBRC 100330 / Delta H) (Methanobacterium thermoautotrophicum)).